The sequence spans 274 residues: 2-dehydro-3-deoxyphosphooctonate aldolase (274 aa).

It belongs to the KdsA family.

Its subcellular location is the cytoplasm. The catalysed reaction is D-arabinose 5-phosphate + phosphoenolpyruvate + H2O = 3-deoxy-alpha-D-manno-2-octulosonate-8-phosphate + phosphate. It functions in the pathway carbohydrate biosynthesis; 3-deoxy-D-manno-octulosonate biosynthesis; 3-deoxy-D-manno-octulosonate from D-ribulose 5-phosphate: step 2/3. It participates in bacterial outer membrane biogenesis; lipopolysaccharide biosynthesis. This is 2-dehydro-3-deoxyphosphooctonate aldolase from Rickettsia rickettsii (strain Iowa).